A 144-amino-acid chain; its full sequence is Large ribosomal subunit protein uL15 (144 aa).

The span at 1-12 shows a compositional bias: polar residues; it reads MRLNTLSPSLGS. The segment at 1–51 is disordered; sequence MRLNTLSPSLGSRKNHKRLGRGIGSGFGKTAGRGHKGQKSRSGGHVNRGFE. Positions 21 to 31 are enriched in gly residues; that stretch reads RGIGSGFGKTA.

The protein belongs to the universal ribosomal protein uL15 family. In terms of assembly, part of the 50S ribosomal subunit.

In terms of biological role, binds to the 23S rRNA. This chain is Large ribosomal subunit protein uL15, found in Buchnera aphidicola subsp. Schizaphis graminum (strain Sg).